A 213-amino-acid polypeptide reads, in one-letter code: A-type ATP synthase subunit D (213 aa).

The protein belongs to the V-ATPase D subunit family. Has multiple subunits with at least A(3), B(3), C, D, E, F, H, I and proteolipid K(x).

It localises to the cell membrane. Its function is as follows. Component of the A-type ATP synthase that produces ATP from ADP in the presence of a proton gradient across the membrane. This is A-type ATP synthase subunit D from Saccharolobus solfataricus (strain ATCC 35092 / DSM 1617 / JCM 11322 / P2) (Sulfolobus solfataricus).